A 382-amino-acid polypeptide reads, in one-letter code: ATP phosphoribosyltransferase regulatory subunit (382 aa).

This sequence belongs to the class-II aminoacyl-tRNA synthetase family. HisZ subfamily. As to quaternary structure, heteromultimer composed of HisG and HisZ subunits.

The protein localises to the cytoplasm. Its pathway is amino-acid biosynthesis; L-histidine biosynthesis; L-histidine from 5-phospho-alpha-D-ribose 1-diphosphate: step 1/9. Required for the first step of histidine biosynthesis. May allow the feedback regulation of ATP phosphoribosyltransferase activity by histidine. This is ATP phosphoribosyltransferase regulatory subunit from Burkholderia cenocepacia (strain HI2424).